A 316-amino-acid chain; its full sequence is N-acetylmuramic acid 6-phosphate etherase (316 aa).

In terms of domain architecture, SIS spans 68–231 (ITDRLRSGGR…STCAMVRLGK (164 aa)). The Proton donor role is filled by E96. E127 is a catalytic residue.

It belongs to the GCKR-like family. MurNAc-6-P etherase subfamily. Homodimer.

It catalyses the reaction N-acetyl-D-muramate 6-phosphate + H2O = N-acetyl-D-glucosamine 6-phosphate + (R)-lactate. The protein operates within amino-sugar metabolism; N-acetylmuramate degradation. Specifically catalyzes the cleavage of the D-lactyl ether substituent of MurNAc 6-phosphate, producing GlcNAc 6-phosphate and D-lactate. The protein is N-acetylmuramic acid 6-phosphate etherase of Prochlorococcus marinus (strain MIT 9303).